A 201-amino-acid chain; its full sequence is Nascent polypeptide-associated complex subunit alpha (201 aa).

Residues 1-20 (MANPRVEELPDEEVKKTVVD) are compositionally biased toward basic and acidic residues. 2 disordered regions span residues 1–51 (MANP…SRNE) and 118–165 (AQQL…IEDK). A compositionally biased stretch (acidic residues) spans 21–36 (DHDDDSSSDSDGEEET). The NAC-A/B domain maps to 48–113 (SRNEKKARKA…AKIEDLNASA (66 aa)). Basic and acidic residues predominate over residues 126 to 149 (GHDHDHAGHSHGEAKASEGDAKKE). Residues 150-161 (EEDDDEEVDADG) show a composition bias toward acidic residues. The region spanning 162–200 (IEDKDIELVMTQAGVSRTKAIKALKENDNDIVNSIMALS) is the UBA domain.

The protein belongs to the NAC-alpha family. Part of the nascent polypeptide-associated complex (NAC), consisting of EGD2 and EGD1. NAC associates with ribosomes via EGD1.

Its subcellular location is the cytoplasm. The protein resides in the nucleus. Its function is as follows. Component of the nascent polypeptide-associated complex (NAC), a dynamic component of the ribosomal exit tunnel, protecting the emerging polypeptides from interaction with other cytoplasmic proteins to ensure appropriate nascent protein targeting. The NAC complex also promotes mitochondrial protein import by enhancing productive ribosome interactions with the outer mitochondrial membrane and blocks the inappropriate interaction of ribosomes translating non-secretory nascent polypeptides with translocation sites in the membrane of the endoplasmic reticulum. EGD2 may also be involved in transcription regulation. The chain is Nascent polypeptide-associated complex subunit alpha (EGD2) from Pyricularia oryzae (strain 70-15 / ATCC MYA-4617 / FGSC 8958) (Rice blast fungus).